The following is a 185-amino-acid chain: Elongation factor P (185 aa).

The protein belongs to the elongation factor P family.

Its subcellular location is the cytoplasm. It participates in protein biosynthesis; polypeptide chain elongation. In terms of biological role, involved in peptide bond synthesis. Stimulates efficient translation and peptide-bond synthesis on native or reconstituted 70S ribosomes in vitro. Probably functions indirectly by altering the affinity of the ribosome for aminoacyl-tRNA, thus increasing their reactivity as acceptors for peptidyl transferase. The chain is Elongation factor P from Deinococcus geothermalis (strain DSM 11300 / CIP 105573 / AG-3a).